The chain runs to 190 residues: MTVGTLPIWSKTFSYAIRSLCFLHIIHMYAYEFTETRGESMLPTLSATNDYVHVLKNFQNGRGIKMGDCIVALKPTDPNHRICKRVTGMPGDLVLVDPSTIVNYVGDVLVDEERFGTYIKVPEGHVWVTGDNLSHSLDSRTYNALPMGLIMGKIVAANNFDKPFWDGSIRNIWGFKWINNTFLDVQAKSN.

Residues serine 40 and lysine 84 contribute to the active site.

The protein belongs to the peptidase S26 family. IMP1 subfamily. Component of the mitochondrial inner membrane peptidase (IMP) complex which at least consists of IMP1, IMP2 and SOM1.

The protein localises to the mitochondrion inner membrane. Functionally, catalytic component of the mitochondrial inner membrane peptidase (IMP) complex. IMP catalyzes the removal of signal peptides required for the targeting of proteins from the mitochondrial matrix, across the inner membrane, into the inter-membrane space. The two catalytic IMP subunits seem to have non-overlapping substrate specificities. IMP1 substrates include nuclear encoded CYB2, mitochondrially encoded COX2, NADH-cytochrome b5 reductase and GUT2. The chain is Mitochondrial inner membrane protease subunit 1 (IMP1) from Saccharomyces cerevisiae (strain ATCC 204508 / S288c) (Baker's yeast).